The following is a 37-amino-acid chain: Glucagon-1 (37 aa).

It belongs to the glucagon family.

It localises to the secreted. Glucagon plays a key role in glucose metabolism and homeostasis. Regulates blood glucose by increasing gluconeogenesis and decreasing glycolysis. The sequence is that of Glucagon-1 from Huso dauricus (Kaluga sturgeon).